We begin with the raw amino-acid sequence, 399 residues long: Lysosomal acid lipase/cholesteryl ester hydrolase (399 aa).

An N-terminal signal peptide occupies residues 1–27; the sequence is MKMRFLGLVVCLVLWTLHSEGSGGKLT. A propeptide spans 28 to 76 (removed in mature form); it reads AVDPETNMNVSEIISYWGFPSEEYLVETEDGYILCLNRIPHGRKNHSDK. N-linked (GlcNAc...) asparagine glycans are attached at residues Asn36, Asn72, Asn101, and Asn161. The AB hydrolase-1 domain maps to 80–380; that stretch reads PVVFLQHGLL…EWEHLDFIWG (301 aa). Ser174 functions as the Charge relay system in the catalytic mechanism. 2 N-linked (GlcNAc...) asparagine glycosylation sites follow: Asn273 and Asn321. Residue His374 is the Charge relay system of the active site.

The protein belongs to the AB hydrolase superfamily. Lipase family. In terms of assembly, monomer. Post-translationally, glycosylation is not essential for catalytic activity. In terms of tissue distribution, most abundantly expressed in brain, lung, kidney and mammary gland, a moderate expression seen in placenta and expressed at low levels in the liver and heart.

It is found in the lysosome. The catalysed reaction is a sterol ester + H2O = a sterol + a fatty acid + H(+). The enzyme catalyses cholesteryl (9Z-octadecenoate) + H2O = cholesterol + (9Z)-octadecenoate + H(+). It carries out the reaction a triacylglycerol + H2O = a 1,2-diacylglycerol + a fatty acid + H(+). It catalyses the reaction 1,2-di-(9Z-octadecenoyl)-glycerol + (9Z)-octadecenoate + H(+) = 1,2,3-tri-(9Z-octadecenoyl)-glycerol + H2O. The catalysed reaction is a 1,2-diacylglycerol + H2O = a 1-acylglycerol + a fatty acid + H(+). The enzyme catalyses 1,2-di-(9Z-octadecenoyl)-glycerol + H2O = 1-(9Z-octadecenoyl)-glycerol + (9Z)-octadecenoate + H(+). It carries out the reaction a 1,3-diacylglycerol + H2O = a 1-acylglycerol + a fatty acid + H(+). It catalyses the reaction 1,3-di-(9Z-octadecenoyl)-glycerol + H2O = 1-(9Z-octadecenoyl)-glycerol + (9Z)-octadecenoate + H(+). Functionally, catalyzes the deacylation of cholesteryl ester core lipids of endocytosed low density lipoproteins to generate free fatty acids and cholesterol. Hydrolyzes triglycerides (1,2,3-triacylglycerol) and diglycerides (such as 1,2-diacylglycerol and 1,3-diacylglycerol) with preference for the acyl moieties at the sn-1 or sn-3 positions. This is Lysosomal acid lipase/cholesteryl ester hydrolase (LIPA) from Homo sapiens (Human).